The following is a 217-amino-acid chain: MLTLNKLLARGAGLAPALLKRAATVELDWDVRQKSRFDATDSQGRALGVFLPRGSVVRGGDVLVAEDGSLVRVIAAPQSVLVVRHCSEHGSAFDLLRAAYHLGNRHVPLELQPDRLQLEPDHVLADMLRAMHLIVSEAQAPFEPESGAYGEAAAHGHGHAGHDHAHDHDHGPAQASTPAPTPRGRPVGVAIKAAAPAPHVHGPGCGHDHDHGSGHHH.

Residues 148–217 (AYGEAAAHGH…DHDHGSGHHH (70 aa)) are disordered. The segment covering 160–171 (AGHDHAHDHDHG) has biased composition (basic and acidic residues). The span at 193-202 (AAAPAPHVHG) shows a compositional bias: low complexity. Over residues 206 to 217 (GHDHDHGSGHHH) the composition is skewed to basic and acidic residues.

This sequence belongs to the UreE family.

It is found in the cytoplasm. In terms of biological role, involved in urease metallocenter assembly. Binds nickel. Probably functions as a nickel donor during metallocenter assembly. This is Urease accessory protein UreE from Methylibium petroleiphilum (strain ATCC BAA-1232 / LMG 22953 / PM1).